A 503-amino-acid chain; its full sequence is MTAATTAELVDFDDVVARYEPVMGMEVHVELSTATKMFCGCANRFGAEPNTLVCPVCLGLPGALPVLNEAAVESAIRIGLALNCEITPWGRFARKNYFYPDQPKNYQISQYDEPIAVDGYLDVPLEDGTTWRVEIERAHMEEDTGKLTHLGSDTGRIAGATTSLADYNRAGVPLIEIVTKPIEGAGARAPEIARAYVTALRQLMRALDVSDVRMDQGSMRCDSNVSLKPKGAKEFGTRTETKNVNSLRSVEVAVRYEMRRQAAVLDAGGTVTQETRHFHEDGYTSPGRSKETAQDYRYFPEPDLEPVAPSPELVERLRTTIPELPWLARKRIQDDWGVSDEVMRDLVNAGAVELVAATVDHGVSSEAARAWWGNFLVQKANEAGVELDELPISPAQVAAVVKLVDEGKLSNKLARQVVEGVLAGEGEPEQVMTDRGLALVRDDSVIQAAVDEALAANPDIVEKIRGGKVQAAGAIVGAVMKATKGSADAARVRELVLAACGQS.

It belongs to the GatB/GatE family. GatB subfamily. Heterotrimer of A, B and C subunits.

It carries out the reaction L-glutamyl-tRNA(Gln) + L-glutamine + ATP + H2O = L-glutaminyl-tRNA(Gln) + L-glutamate + ADP + phosphate + H(+). The catalysed reaction is L-aspartyl-tRNA(Asn) + L-glutamine + ATP + H2O = L-asparaginyl-tRNA(Asn) + L-glutamate + ADP + phosphate + 2 H(+). In terms of biological role, allows the formation of correctly charged Asn-tRNA(Asn) or Gln-tRNA(Gln) through the transamidation of misacylated Asp-tRNA(Asn) or Glu-tRNA(Gln) in organisms which lack either or both of asparaginyl-tRNA or glutaminyl-tRNA synthetases. The reaction takes place in the presence of glutamine and ATP through an activated phospho-Asp-tRNA(Asn) or phospho-Glu-tRNA(Gln). The sequence is that of Aspartyl/glutamyl-tRNA(Asn/Gln) amidotransferase subunit B from Mycolicibacterium smegmatis (strain ATCC 700084 / mc(2)155) (Mycobacterium smegmatis).